The sequence spans 98 residues: Large ribosomal subunit protein bL28 (98 aa).

This sequence belongs to the bacterial ribosomal protein bL28 family.

In Rhizobium etli (strain ATCC 51251 / DSM 11541 / JCM 21823 / NBRC 15573 / CFN 42), this protein is Large ribosomal subunit protein bL28.